The chain runs to 123 residues: UPF0102 protein mma_0204 (123 aa).

Belongs to the UPF0102 family.

This chain is UPF0102 protein mma_0204, found in Janthinobacterium sp. (strain Marseille) (Minibacterium massiliensis).